Here is a 325-residue protein sequence, read N- to C-terminus: Fatty acid synthase alpha subunit hexA (325 aa).

Aspartate 209 lines the Mg(2+) pocket. Acetyl-CoA-binding positions include 209 to 211, 255 to 265, 279 to 282, and 301 to 303; these read DLV, EAVFKCLHTQT, KSDN, and ISH. Residue serine 302 participates in Mg(2+) binding.

It belongs to the thiolase-like superfamily. Fungal fatty acid synthetase subunit alpha family. In terms of assembly, [Alpha(6)beta(6)] hexamers of two multifunctional subunits (alpha and beta). In terms of processing, 4'-phosphopantetheine is transferred from CoA to a specific serine of the acyl carrier domain by the C-terminal PPT domain. This modification is essential for activity because fatty acids are bound in thioester linkage to the sulfhydryl of the prosthetic group.

The catalysed reaction is acetyl-CoA + n malonyl-CoA + 2n NADPH + 4n H(+) = a long-chain-acyl-CoA + n CoA + n CO2 + 2n NADP(+).. It carries out the reaction a fatty acyl-[ACP] + malonyl-[ACP] + H(+) = a 3-oxoacyl-[ACP] + holo-[ACP] + CO2. The enzyme catalyses a (3R)-hydroxyacyl-[ACP] + NADP(+) = a 3-oxoacyl-[ACP] + NADPH + H(+). It functions in the pathway mycotoxin biosynthesis. Functionally, fatty acid synthase alpha subunit; part of the fragmented gene cluster that mediates the biosynthesis of dothistromin (DOTH), a polyketide toxin very similar in structure to the aflatoxin precursor, versicolorin B. The first step of the pathway is the conversion of acetate to norsolorinic acid (NOR) and requires the fatty acid synthase subunits hexA and hexB, as well as the polyketide synthase pksA. PksA combines a hexanoyl starter unit and 7 malonyl-CoA extender units to synthesize the precursor NOR. The hexanoyl starter unit is provided to the acyl-carrier protein (ACP) domain by the fungal fatty acid synthase hexA/hexB. The second step is the conversion of NOR to averantin (AVN) and requires the norsolorinic acid ketoreductase nor1, which catalyzes the dehydration of norsolorinic acid to form (1'S)-averantin. The cytochrome P450 monooxygenase avnA then catalyzes the hydroxylation of AVN to 5'hydroxyaverantin (HAVN). The next step is performed by adhA that transforms HAVN to averufin (AVF). Averufin might then be converted to hydroxyversicolorone by cypX and avfA. Hydroxyversicolorone is further converted versiconal hemiacetal acetate (VHA) by moxY. VHA is then the substrate for the versiconal hemiacetal acetate esterase est1 to yield versiconal (VAL). Versicolorin B synthase vbsA then converts VAL to versicolorin B (VERB) by closing the bisfuran ring. Then, the activity of the versicolorin B desaturase verB leads to versicolorin A (VERA). DotB, a predicted chloroperoxidase, may perform epoxidation of the A-ring of VERA. Alternatively, a cytochrome P450, such as cypX or avnA could catalyze this step. It is also possible that another, uncharacterized, cytochrome P450 enzyme is responsible for this step. Opening of the epoxide could potentially be achieved by the epoxide hydrolase epoA. However, epoA seems not to be required for DOTH biosynthesis, but other epoxide hydrolases may have the ability to complement this hydrolysis. Alternatively, opening of the epoxide ring could be achieved non-enzymatically. The next step is the deoxygenation of ring A to yield the 5,8-dihydroxyanthraquinone which is most likely catalyzed by the NADPH dehydrogenase encoded by ver1. The last stages of DOTH biosynthesis are proposed to involve hydroxylation of the bisfuran. OrdB and norB might have oxidative roles here. An alternative possibility is that cytochrome P450 monoogenases such as avnA and cypX might perform these steps in addition to previously proposed steps. The chain is Fatty acid synthase alpha subunit hexA from Dothistroma septosporum (Red band needle blight fungus).